The following is a 677-amino-acid chain: DNA ligase (677 aa).

NAD(+) contacts are provided by residues 32-36 (DSEYD), 81-82 (SL), and glutamate 112. Residue lysine 114 is the N6-AMP-lysine intermediate of the active site. Residues arginine 135, glutamate 171, lysine 288, and lysine 312 each contribute to the NAD(+) site. Residues cysteine 416, cysteine 419, cysteine 434, and cysteine 439 each contribute to the Zn(2+) site. The BRCT domain occupies 598-677 (YKPLPLSGVE…QEFINMLEQS (80 aa)).

The protein belongs to the NAD-dependent DNA ligase family. LigA subfamily. The cofactor is Mg(2+). It depends on Mn(2+) as a cofactor.

It carries out the reaction NAD(+) + (deoxyribonucleotide)n-3'-hydroxyl + 5'-phospho-(deoxyribonucleotide)m = (deoxyribonucleotide)n+m + AMP + beta-nicotinamide D-nucleotide.. DNA ligase that catalyzes the formation of phosphodiester linkages between 5'-phosphoryl and 3'-hydroxyl groups in double-stranded DNA using NAD as a coenzyme and as the energy source for the reaction. It is essential for DNA replication and repair of damaged DNA. In Dehalococcoides mccartyi (strain ATCC BAA-2266 / KCTC 15142 / 195) (Dehalococcoides ethenogenes (strain 195)), this protein is DNA ligase.